We begin with the raw amino-acid sequence, 371 residues long: Neuropeptide Y receptor type 6 (371 aa).

Residues 1–31 lie on the Extracellular side of the membrane; that stretch reads MEVSLNDPASNKTSAKSNSSAFFYFESCQSP. N-linked (GlcNAc...) asparagine glycosylation is found at N11 and N18. The chain crosses the membrane as a helical span at residues 32–52; the sequence is SLALLLLLIAYTVVLIMGICG. Residues 53–72 are Cytoplasmic-facing; sequence NLSLITIIFKKQREAQNVTN. The helical transmembrane segment at 73–93 threads the bilayer; it reads ILIANLSLSDILVCVMCIPFT. Residues 94-111 lie on the Extracellular side of the membrane; that stretch reads AIYTLMDRWIFGNTMCKL. A disulfide bridge connects residues C109 and C196. A helical membrane pass occupies residues 112–132; the sequence is TSYVQSVSISVSIFSLVLIAI. Topologically, residues 133-150 are cytoplasmic; sequence ERYQLIVNPRGWKPSASH. The helical transmembrane segment at 151 to 171 threads the bilayer; that stretch reads AYWGIMLIWLFSLLLSIPLLL. The Extracellular portion of the chain corresponds to 172–213; it reads SYHLTDEPFRNLSLPTDLYSHHVVCVEHWPSKTNQLLYSTSL. Residue N182 is glycosylated (N-linked (GlcNAc...) asparagine). The chain crosses the membrane as a helical span at residues 214–234; sequence IMLQYFVPLGFMFICYLKIVI. At 235 to 263 the chain is on the cytoplasmic side; that stretch reads CLHKRNSKIDRRRENESRLTENKRINTML. Residues 264–284 traverse the membrane as a helical segment; that stretch reads ISIVVTFAACWLPLNTFNVIF. Residues 285 to 297 are Extracellular-facing; that stretch reads DWYHEVLMSCHHD. A helical membrane pass occupies residues 298 to 318; that stretch reads LVFAICHLVAMVSTCINPLFY. Residues 319–371 are Cytoplasmic-facing; that stretch reads GFLNRNFQKDLVVLIHHCLCFALRERYENIAISTLHTDESKGSLRVAHIPAGI. C336 carries the S-palmitoyl cysteine lipid modification.

It belongs to the G-protein coupled receptor 1 family. Expressed in hippocampus, striatum, hypothalamus, cerebellum, small intestine, colon and adrenal gland.

Its subcellular location is the cell membrane. Functionally, receptor for neuropeptide Y and peptide YY. The activity of this receptor is mediated by G proteins that inhibit adenylate cyclase activity. The protein is Neuropeptide Y receptor type 6 (NPY6R) of Oryctolagus cuniculus (Rabbit).